The sequence spans 447 residues: Acidic leucine-rich nuclear phosphoprotein 32-related protein (447 aa).

LRR repeat units follow at residues 49–70 (NLQHLSVANIGVSSLEQFPRLG), 71–90 (NLQKLILSDNRITVGLEFLV), and 96–117 (SFCDLDLSNNRIQFVEDLAPLA). In terms of domain architecture, LRRCT spans 129 to 167 (CPVTRLKDYRSRVFGLIKTLKYLDKTDAEGNERPESDDE). The disordered stretch occupies residues 155-447 (DAEGNERPES…EDDDDDDEER (293 aa)). 2 stretches are compositionally biased toward acidic residues: residues 163 to 194 (ESDDEDDEEDEEDEEEEEEGDEEDPGSGEIDG) and 215 to 231 (VDVDEDEESDAEDDESE). Positions 232–242 (QATGVNGTSYR) are enriched in polar residues. 5 stretches are compositionally biased toward acidic residues: residues 256–277 (VREDDGDDSESGEEEVGEDNDV), 284–309 (EDSENEEDGVDDEEDDEEDEEEEEVD), 336–374 (GDDDEDGDGETGEDDQGVEDDGEFADEDDDVEEEDEESG), 397–415 (PINEDNDPDEEEEVEDDLP), and 433–447 (DDDDGEDDDDDDEER).

Belongs to the ANP32 family.

The chain is Acidic leucine-rich nuclear phosphoprotein 32-related protein from Arabidopsis thaliana (Mouse-ear cress).